Here is a 246-residue protein sequence, read N- to C-terminus: 1-(5-phosphoribosyl)-5-[(5-phosphoribosylamino)methylideneamino] imidazole-4-carboxamide isomerase (246 aa).

D8 serves as the catalytic Proton acceptor. The active-site Proton donor is the D130.

This sequence belongs to the HisA/HisF family.

Its subcellular location is the cytoplasm. It catalyses the reaction 1-(5-phospho-beta-D-ribosyl)-5-[(5-phospho-beta-D-ribosylamino)methylideneamino]imidazole-4-carboxamide = 5-[(5-phospho-1-deoxy-D-ribulos-1-ylimino)methylamino]-1-(5-phospho-beta-D-ribosyl)imidazole-4-carboxamide. It functions in the pathway amino-acid biosynthesis; L-histidine biosynthesis; L-histidine from 5-phospho-alpha-D-ribose 1-diphosphate: step 4/9. This chain is 1-(5-phosphoribosyl)-5-[(5-phosphoribosylamino)methylideneamino] imidazole-4-carboxamide isomerase, found in Shigella sonnei (strain Ss046).